Reading from the N-terminus, the 566-residue chain is Type 2 DNA topoisomerase 6 subunit B (566 aa).

ATP is bound by residues Asn-48, Asp-80, 101 to 102 (TK), 111 to 118 (GQQGIGIS), and Lys-475.

This sequence belongs to the TOP6B family. In terms of assembly, homodimer. Heterotetramer of two Top6A and two Top6B chains.

It carries out the reaction ATP-dependent breakage, passage and rejoining of double-stranded DNA.. Its function is as follows. Relaxes both positive and negative superturns and exhibits a strong decatenase activity. The sequence is that of Type 2 DNA topoisomerase 6 subunit B from Thermococcus sibiricus (strain DSM 12597 / MM 739).